Here is a 416-residue protein sequence, read N- to C-terminus: Serine/threonine transporter SstT (416 aa).

9 helical membrane-spanning segments follow: residues 15–35 (SLVS…MFMP), 49–69 (VGAL…AAII), 82–102 (ILLL…VASF), 141–161 (ALMD…GIAM), 192–212 (LGIL…ALFG), 217–237 (LVVL…IIVF), 288–308 (VSIP…ITVL), 330–350 (VVAT…LLLI), and 356–376 (LFGI…IIGV).

The protein belongs to the dicarboxylate/amino acid:cation symporter (DAACS) (TC 2.A.23) family.

The protein resides in the cell inner membrane. It catalyses the reaction L-serine(in) + Na(+)(in) = L-serine(out) + Na(+)(out). It carries out the reaction L-threonine(in) + Na(+)(in) = L-threonine(out) + Na(+)(out). Its function is as follows. Involved in the import of serine and threonine into the cell, with the concomitant import of sodium (symport system). The protein is Serine/threonine transporter SstT of Aeromonas salmonicida (strain A449).